The chain runs to 149 residues: Aquaporin-like protein 2 (149 aa).

The disordered stretch occupies residues 1-35 (MSNESNDLEKNISHLDPTGVDNAYIPPEQPETKHS). Topologically, residues 1–47 (MSNESNDLEKNISHLDPTGVDNAYIPPEQPETKHSRFNIDRGTLRNH) are cytoplasmic. The chain crosses the membrane as a helical span at residues 48-68 (FIAAVGEFCGTFMFLWCAYVI). The Extracellular portion of the chain corresponds to 69 to 89 (CNVANHDVALTTEPEGSHPGQ). A helical membrane pass occupies residues 90–110 (LIMIALGFGFSVMFSIWCFWW). Residues 111-149 (GFEPSRFSLFVFGQSHLTSQMCSDVVSSDHCWDGCWWCR) lie on the Cytoplasmic side of the membrane.

Belongs to the MIP/aquaporin (TC 1.A.8) family.

The protein resides in the endoplasmic reticulum membrane. It is found in the cell membrane. Its function is as follows. Water channel required to facilitate the transport of water across membranes. Involved in freeze tolerance, osmotolerance and cell flocculation in liquid cultures. Is non-functional in most laboratory strains. The sequence is that of Aquaporin-like protein 2 (AQY2-2) from Saccharomyces cerevisiae (strain Lalvin EC1118 / Prise de mousse) (Baker's yeast).